A 185-amino-acid polypeptide reads, in one-letter code: Ribosome-recycling factor (185 aa).

Residues 145–164 (DGEAGEDEVSRAEKDLDKTT) are disordered.

This sequence belongs to the RRF family.

It localises to the cytoplasm. In terms of biological role, responsible for the release of ribosomes from messenger RNA at the termination of protein biosynthesis. May increase the efficiency of translation by recycling ribosomes from one round of translation to another. This is Ribosome-recycling factor from Mycobacterium sp. (strain JLS).